Here is a 659-residue protein sequence, read N- to C-terminus: Fructose-1,6-bisphosphatase class 3 (659 aa).

The protein belongs to the FBPase class 3 family. The cofactor is Mn(2+).

It carries out the reaction beta-D-fructose 1,6-bisphosphate + H2O = beta-D-fructose 6-phosphate + phosphate. The protein operates within carbohydrate biosynthesis; gluconeogenesis. The chain is Fructose-1,6-bisphosphatase class 3 from Clostridium botulinum (strain Alaska E43 / Type E3).